Consider the following 392-residue polypeptide: Putative purine permease 19 (392 aa).

The span at 1-16 (MGFHTKSPDRVTHEEE) shows a compositional bias: basic and acidic residues. Positions 1–29 (MGFHTKSPDRVTHEEEANIGVDNQPRETT) are disordered. Position 30 is a phosphoserine (S30). 10 consecutive transmembrane segments (helical) span residues 46-66 (ICIFVCSCLVVAGRVLSTLLL), 88-108 (WLQSMVQNAAFPFTAFLLLLW), 128-148 (LFLLYISLGVLFAAYSQLYAI), 154-174 (VFFLWIFTSQLIFTSIFTTII), 182-202 (WIILSMVLSGAATGLGITSSG), 220-240 (WCAFFGTVAFSLSLCIMQLGF), 254-274 (VILMQTNASMIATLICLVGLF), 300-320 (LIGLSLAWQVMSLGLVGLVCL), 325-345 (FSNVVSFCSTPLVNILLVLAF), and 354-374 (FFKEGALVAGILGFASYVYSL).

This sequence belongs to the purine permeases (TC 2.A.7.14) family.

The protein resides in the membrane. This is Putative purine permease 19 (PUP19) from Arabidopsis thaliana (Mouse-ear cress).